An 821-amino-acid polypeptide reads, in one-letter code: LPS-assembly protein LptD (821 aa).

Positions 1 to 20 are cleaved as a signal peptide; it reads MGKRLFWTALSGLMVSAAHA.

It belongs to the LptD family. Component of the lipopolysaccharide transport and assembly complex. Interacts with LptE and LptA.

The protein resides in the cell outer membrane. Together with LptE, is involved in the assembly of lipopolysaccharide (LPS) at the surface of the outer membrane. This is LPS-assembly protein LptD from Chromohalobacter salexigens (strain ATCC BAA-138 / DSM 3043 / CIP 106854 / NCIMB 13768 / 1H11).